Here is a 339-residue protein sequence, read N- to C-terminus: Sphingomyelinase D (339 aa).

Positions 1-21 are cleaved as a signal peptide; it reads MVSLLRLCSFLLAAGSILVQG. His60 is an active-site residue. Positions 80, 82, and 128 each coordinate Mg(2+). The short motif at 309–316 is the SMD-tail element; the sequence is ATVDDNPW. Residues 313-339 are disordered; the sequence is DNPWSSMSKKGSSKSSWVKGEVPSIAH. Positions 317–328 are enriched in low complexity; sequence SSMSKKGSSKSS.

It belongs to the sphingomyelinase D/phospholipase D family. The cofactor is Mg(2+).

Its subcellular location is the secreted. The catalysed reaction is a sphingomyelin + H2O = an N-acylsphing-4-enine 1-phosphate + choline + H(+). In terms of biological role, catalyzes the hydrolysis of sphingomyelin. Sphingomyelinases D are produced by some spider in their venoms, but also by arthropods such as ticks, or pathogenic bacteria and fungi. They might play a role in pathogenicity through different mechanisms, such as membrane destabilization and host cell penetration, but also pulmonary inflammation and cutaneous lesions. This is Sphingomyelinase D from Arthroderma benhamiae (strain ATCC MYA-4681 / CBS 112371) (Trichophyton mentagrophytes).